The chain runs to 121 residues: Putative membrane protein insertion efficiency factor (121 aa).

Belongs to the UPF0161 family.

The protein resides in the cell inner membrane. Could be involved in insertion of integral membrane proteins into the membrane. In Rhodopseudomonas palustris (strain HaA2), this protein is Putative membrane protein insertion efficiency factor.